A 148-amino-acid polypeptide reads, in one-letter code: Probable DNA-directed RNA polymerases I, II, and III subunit RPABC3 (148 aa).

Positions Asp-16–Ile-40 are non-specific ssDNA binding.

It belongs to the eukaryotic RPB8 RNA polymerase subunit family. In terms of assembly, component of the RNA polymerase I (Pol I), RNA polymerase II (Pol II) and RNA polymerase III (Pol III) complexes consisting of at least 13, 12 and 17 subunits, respectively. Directly interacts with POLR2A.

It is found in the nucleus. Functionally, DNA-dependent RNA polymerase catalyzes the transcription of DNA into RNA using the four ribonucleoside triphosphates as substrates. Common component of RNA polymerases I, II and III which synthesize ribosomal RNA precursors, mRNA precursors and many functional non-coding RNAs, and small RNAs, such as 5S rRNA and tRNAs, respectively. This Caenorhabditis briggsae protein is Probable DNA-directed RNA polymerases I, II, and III subunit RPABC3.